Reading from the N-terminus, the 1329-residue chain is MSQEYIEDKEVTLTKLSSGRRLLEALLILIVLFAVWLMAALLSFNPSDPSWSQTAWHEPIHNLGGMPGAWLADTLFFIFGVMAYTIPVIIVGGCWFAWRHQSSDEYIDYFAVSLRIIGVLALILTSCGLAAINADDIWYFASGGVIGSLLSTTLQPLLHSSGGTIALLCVWAAGLTLFTGWSWVTIAEKLGGWILNILTFASNRTRRDDTWVDEDEYEDDEEYEDENHGKQHESRRARILRGALARRKRLAEKFINPMGRQTDAALFSGKRMDDDEEITYTARGVAADPDDVLFSGNRATQPEYDEYDPLLNGAPITEPVAVAAAATTATQSWAAPVEPVTQTPPVASVDVPPAQPTVAWQPVPGPQTGEPVIAPAPEGYPQQSQYAQPAVQYNEPLQQPVQPQQPYYAPAAEQPAQQPYYAPAPEQPVAGNAWQAEEQQSTFAPQSTYQTEQTYQQPAAQEPLYQQPQPVEQQPVVEPEPVVEETKPARPPLYYFEEVEEKRAREREQLAAWYQPIPEPVKEPEPIKSSLKAPSVAAVPPVEAAAAVSPLASGVKKATLATGAAATVAAPVFSLANSGGPRPQVKEGIGPQLPRPKRIRVPTRRELASYGIKLPSQRAAEEKAREAQRNQYDSGDQYNDDEIDAMQQDELARQFAQTQQQRYGEQYQHDVPVNAEDADAAAEAELARQFAQTQQQRYSGEQPAGANPFSLDDFEFSPMKALLDDGPHEPLFTPIVEPVQQPQQPVAPQQQYQQPQQPVPPQPQYQQPQQPVAPQPQYQQPQQPVAPQQQYQQPQQPVAPQQQYQQPQQPVAPQPQDTLLHPLLMRNGDSRPLHKPTTPLPSLDLLTPPPSEVEPVDTFALEQMARLVEARLADFRIKADVVNYSPGPVITRFELNLAPGVKAARISNLSRDLARSLSTVAVRVVEVIPGKPYVGLELPNKKRQTVYLREVLDNAKFRDNPSPLTVVLGKDIAGEPVVADLAKMPHLLVAGTTGSGKSVGVNAMILSMLYKAQPEDVRFIMIDPKMLELSVYEGIPHLLTEVVTDMKDAANALRWCVNEMERRYKLMSALGVRNLAGYNEKIAEADRMMRPIPDPYWKPGDSMDAQHPVLKKEPYIVVLVDEFADLMMTVGKKVEELIARLAQKARAAGIHLVLATQRPSVDVITGLIKANIPTRIAFTVSSKIDSRTILDQAGAESLLGMGDMLYSGPNSTLPVRVHGAFVRDQEVHAVVQDWKARGRPQYVDGITSDSESEGGAGGFDGAEELDPLFDQAVQFVTEKRKASISGVQRQFRIGYNRAARIIEQMEAQGIVSEQGHNGNREVLAPPPFD.

Residues Met-1–Glu-24 are Cytoplasmic-facing. A helical transmembrane segment spans residues Ala-25–Phe-44. Residues Asn-45 to Thr-74 lie on the Periplasmic side of the membrane. Residues Leu-75 to Trp-98 traverse the membrane as a helical segment. Residues Arg-99 to Arg-115 are Cytoplasmic-facing. Residues Ile-116–Ile-132 traverse the membrane as a helical segment. Over Asn-133–Gly-162 the chain is Periplasmic. A helical transmembrane segment spans residues Gly-163 to Thr-179. Over Gly-180 to Asp-1329 the chain is Cytoplasmic. Residues Val-184 to Asp-817 are linker. Disordered regions lie at residues Val-351–Tyr-386, Trp-434–Ala-489, Asn-577–Pro-596, Arg-604–Asn-639, Arg-688–Asp-712, and Gln-741–Pro-849. Polar residues predominate over residues Glu-437–Thr-448. Residues Tyr-449–Glu-480 show a composition bias toward low complexity. The segment covering Ala-619–Gln-628 has biased composition (basic and acidic residues). The segment covering Phe-690 to Ser-699 has biased composition (polar residues). Low complexity-rich tracts occupy residues Gln-741–Gln-756, Gln-764–Gln-816, and Pro-836–Leu-846. The alpha stretch occupies residues Thr-818–Arg-943. The interval Gln-944–Gly-1258 is beta. Residues Gly-974–Arg-1187 enclose the FtsK domain. Gly-994–Val-999 serves as a coordination point for ATP. Positions Phe-1259–Asp-1329 are gamma.

This sequence belongs to the FtsK/SpoIIIE/SftA family. Homohexamer. Forms a ring that surrounds DNA. Interacts with FtsZ, FtsQ, FtsL and FtsI.

It is found in the cell inner membrane. Its function is as follows. Essential cell division protein that coordinates cell division and chromosome segregation. The N-terminus is involved in assembly of the cell-division machinery. The C-terminus functions as a DNA motor that moves dsDNA in an ATP-dependent manner towards the dif recombination site, which is located within the replication terminus region. Translocation stops specifically at Xer-dif sites, where FtsK interacts with the Xer recombinase, allowing activation of chromosome unlinking by recombination. FtsK orienting polar sequences (KOPS) guide the direction of DNA translocation. FtsK can remove proteins from DNA as it translocates, but translocation stops specifically at XerCD-dif site, thereby preventing removal of XerC and XerD from dif. Stoppage of translocation is accompanied by a reduction in ATPase activity. Also stimulates topoisomerase 4 activity. Required for the targeting of FtsQ, FtsL and FtsI to the septum. The protein is DNA translocase FtsK (ftsK) of Escherichia coli (strain K12).